Consider the following 552-residue polypeptide: Probable protein kinase UbiB (552 aa).

In terms of domain architecture, Protein kinase spans 121–504 (HFDTVPLASA…QGLQRRVVNA (384 aa)). ATP-binding positions include 127–135 (LASASISQV) and lysine 149. Aspartate 284 functions as the Proton acceptor in the catalytic mechanism. The next 2 membrane-spanning stretches (helical) occupy residues 501–521 (VVNA…YGLH) and 526–546 (YLGA…LALF).

Belongs to the ABC1 family. UbiB subfamily.

The protein resides in the cell inner membrane. The protein operates within cofactor biosynthesis; ubiquinone biosynthesis [regulation]. Its function is as follows. Is probably a protein kinase regulator of UbiI activity which is involved in aerobic coenzyme Q (ubiquinone) biosynthesis. The protein is Probable protein kinase UbiB of Xylella fastidiosa (strain 9a5c).